Here is a 523-residue protein sequence, read N- to C-terminus: Tyrosine ammonia-lyase (523 aa).

Tyr-60 acts as the Proton donor/acceptor in catalysis. His-89 lines the substrate pocket. Residues 149–151 constitute a cross-link (5-imidazolinone (Ala-Gly)); sequence ASG. Ser-150 carries the 2,3-didehydroalanine (Ser) modification. Substrate is bound by residues Arg-303 and 432–436; that span reads NAANQ.

It belongs to the PAL/histidase family. Homotetramer. In terms of processing, contains an active site 4-methylidene-imidazol-5-one (MIO), which is formed autocatalytically by cyclization and dehydration of residues Ala-Ser-Gly.

It carries out the reaction L-tyrosine = (E)-4-coumarate + NH4(+). Functionally, catalyzes the non-oxidative deamination of L-tyrosine. Has very low phenylalanine ammonia-lyase activity (in vitro). This Cereibacter sphaeroides (strain ATCC 17023 / DSM 158 / JCM 6121 / CCUG 31486 / LMG 2827 / NBRC 12203 / NCIMB 8253 / ATH 2.4.1.) (Rhodobacter sphaeroides) protein is Tyrosine ammonia-lyase (hutH).